We begin with the raw amino-acid sequence, 457 residues long: Peptidyl-prolyl cis-trans isomerase FKBP5 (457 aa).

Residue M1 is modified to N-acetylmethionine. The span at 1–11 (MTTDEGAKNNE) shows a compositional bias: basic and acidic residues. The segment at 1 to 24 (MTTDEGAKNNEESPTATVAEQGED) is disordered. S13 is subject to Phosphoserine. At K28 the chain carries N6-acetyllysine. Residues 42–130 (NGEETPMIGD…KIPSNATLFF (89 aa)) form the PPIase FKBP-type 1 domain. At K155 the chain carries N6-acetyllysine. The PPIase FKBP-type 2 domain occupies 157–243 (EGYSNPNEGA…GIEPNAELIY (87 aa)). TPR repeat units follow at residues 268–301 (AAIVKEKGTVYFKGGKYMQAVIQYGKIVSWLEME), 317–350 (LAAFLNLAMCYLKLREYTKAVECCDKALGLDSAN), and 351–384 (EKGLYRRGEAQLLMNEFESAKGDFEKVLEVNPQN). Residues 420 to 457 (DAKEEANKAMGKKTSEGVTNEKGTDSQAMEEEKPEGHV) are disordered. A Phosphoserine modification is found at S445.

As to quaternary structure, part of a heteromultimeric cytoplasmic complex with HSP90AA1, HSPA1A/HSPA1B and steroid receptors. Upon ligand binding dissociates from the complex and FKBP4 takes its place. Interacts with functionally mature heterooligomeric progesterone receptor complexes along with HSP90 and TEBP. Interacts with NR3C1. Interacts with Akt/AKT1 and PHLPP1; enhancing dephosphorylation and subsequent activation of Akt/AKT1. Interacts with IFI44L; this interaction modulates the kinase activity of IKBKB and IKBKE. Interacts with IKBKB and IKBKE. Acetylation impairs ability to promote interaction between Akt/AKT1 and PHLPP1. Deacetylation by SIRT7 promotes interaction between Akt/AKT1 and PHLPP1, leading to suppress Akt/AKT1 activation. Post-translationally, ubiquitinated, leading to degradation in a proteasome-dependent manner. Deubiquitinated by USP49, leading to stabilization. Widely expressed, enriched in testis compared to other tissues.

It localises to the cytoplasm. Its subcellular location is the nucleus. It catalyses the reaction [protein]-peptidylproline (omega=180) = [protein]-peptidylproline (omega=0). Inhibited by both FK506 and rapamycin. Immunophilin protein with PPIase and co-chaperone activities. Component of unligated steroid receptors heterocomplexes through interaction with heat-shock protein 90 (HSP90). Plays a role in the intracellular trafficking of heterooligomeric forms of steroid hormone receptors maintaining the complex into the cytoplasm when unliganded. Acts as a regulator of Akt/AKT1 activity by promoting the interaction between Akt/AKT1 and PHLPP1, thereby enhancing dephosphorylation and subsequent activation of Akt/AKT1. Interacts with IKBKE and IKBKB which facilitates IKK complex assembly leading to increased IKBKE and IKBKB kinase activity, NF-kappa-B activation, and IFN production. The protein is Peptidyl-prolyl cis-trans isomerase FKBP5 (FKBP5) of Homo sapiens (Human).